We begin with the raw amino-acid sequence, 395 residues long: 8-amino-7-oxononanoate synthase (395 aa).

Residue Arg24 participates in substrate binding. Residue 111 to 112 participates in pyridoxal 5'-phosphate binding; the sequence is GF. His136 is a binding site for substrate. Pyridoxal 5'-phosphate-binding positions include Ser184, 209–212, and 240–243; these read DDAH and TLSK. At Lys243 the chain carries N6-(pyridoxal phosphate)lysine. Thr357 lines the substrate pocket.

This sequence belongs to the class-II pyridoxal-phosphate-dependent aminotransferase family. BioF subfamily. As to quaternary structure, homodimer. Requires pyridoxal 5'-phosphate as cofactor.

The enzyme catalyses 6-carboxyhexanoyl-[ACP] + L-alanine + H(+) = (8S)-8-amino-7-oxononanoate + holo-[ACP] + CO2. Its pathway is cofactor biosynthesis; biotin biosynthesis. In terms of biological role, catalyzes the decarboxylative condensation of pimeloyl-[acyl-carrier protein] and L-alanine to produce 8-amino-7-oxononanoate (AON), [acyl-carrier protein], and carbon dioxide. The polypeptide is 8-amino-7-oxononanoate synthase (Thermoanaerobacter pseudethanolicus (strain ATCC 33223 / 39E) (Clostridium thermohydrosulfuricum)).